Reading from the N-terminus, the 454-residue chain is Guanine deaminase (454 aa).

Residues His-82 and His-84 each coordinate Zn(2+). Substrate-binding positions include 84–87 (HASQ), 213–214 (RF), 240–243 (HISE), and Asp-330. Zn(2+)-binding residues include His-240 and Asp-330. The residue at position 453 (Ser-453) is a Phosphoserine.

It belongs to the metallo-dependent hydrolases superfamily. ATZ/TRZ family. Homodimer. Requires Zn(2+) as cofactor.

The catalysed reaction is guanine + H2O + H(+) = xanthine + NH4(+). Its pathway is purine metabolism; guanine degradation; xanthine from guanine: step 1/1. In terms of biological role, catalyzes the hydrolytic deamination of guanine, producing xanthine and ammonia. The sequence is that of Guanine deaminase (GDA) from Pongo abelii (Sumatran orangutan).